A 201-amino-acid polypeptide reads, in one-letter code: Mediator of RNA polymerase II transcription subunit 22 (201 aa).

Positions 93 to 123 form a coiled coil; the sequence is SVNEAIDQRNQQLRALQEECDRKLIALRDEV. A disordered region spans residues 166–201; sequence LSAPLLASPEPSAGGPLQAAAPTHSHAGGPGPTEHA.

In terms of assembly, component of the Mediator complex, which is composed of MED1, MED4, MED6, MED7, MED8, MED9, MED10, MED11, MED12, MED13, MED13L, MED14, MED15, MED16, MED17, MED18, MED19, MED20, MED21, MED22, MED23, MED24, MED25, MED26, MED27, MED29, MED30, MED31, CCNC, CDK8 and CDC2L6/CDK11. The MED12, MED13, CCNC and CDK8 subunits form a distinct module termed the CDK8 module. Mediator containing the CDK8 module is less active than Mediator lacking this module in supporting transcriptional activation. Individual preparations of the Mediator complex lacking one or more distinct subunits have been variously termed ARC, CRSP, DRIP, PC2, SMCC and TRAP.

The protein resides in the nucleus. Component of the Mediator complex, a coactivator involved in the regulated transcription of nearly all RNA polymerase II-dependent genes. Mediator functions as a bridge to convey information from gene-specific regulatory proteins to the basal RNA polymerase II transcription machinery. Mediator is recruited to promoters by direct interactions with regulatory proteins and serves as a scaffold for the assembly of a functional preinitiation complex with RNA polymerase II and the general transcription factors. In Bos taurus (Bovine), this protein is Mediator of RNA polymerase II transcription subunit 22 (MED22).